Here is a 446-residue protein sequence, read N- to C-terminus: MEETIKDPPTSAVLLDHCHFSQVIFNSVEKFYIPGGDVTCHYTFTQHFIPRRKDWIGIFRVGWKTTREYYTFMWVTLPIDLNNKSAKQQEVQFKAYYLPKDDEYYQFCYVDEDGVVRGASIPFQFRPENEEDILVVTTQGEVEEIEQHNKELCKENQELKDSCISLQKQNSDMQAELQKKQEELETLQSINKKLELKVKEQKDYWETELLQLKEQNQKMSSENEKMGIRVDQLQAQLSTQEKEMEKLVQGDQDKTEQLEQLKKENDHLFLSLTEQRKDQKKLEQTVEQMKQNETTAMKKQQELMDENFDLSKRLSENEIICNALQRQKERLEGENDLLKRENSRLLSYMGLDFNSLPYQVPTSDEGGARQNPGLAYGNPYSGIQESSSPSPLSIKKCPICKADDICDHTLEQQQMQPLCFNCPICDKIFPATEKQIFEDHVFCHSL.

Residues 133 to 136 (ILVV) carry the CLIR motif. Residues 137–349 (TTQGEVEEIE…RENSRLLSYM (213 aa)) are a coiled coil. The LIR-like signature appears at 203–206 (DYWE). Residues 362–390 (TSDEGGARQNPGLAYGNPYSGIQESSSPS) are disordered. Residues 371–381 (NPGLAYGNPYS) form an interaction with LGALS8 region. Residues 381–390 (SGIQESSSPS) show a composition bias toward polar residues. Residues 395–446 (KKCPICKADDICDHTLEQQQMQPLCFNCPICDKIFPATEKQIFEDHVFCHSL) are interaction with MYO6. Residues 419 to 444 (CFNCPICDKIFPATEKQIFEDHVFCH) form a UBZ1-type zinc finger. 4 residues coordinate Zn(2+): Cys422, Cys425, His440, and His444. Ser445 carries the post-translational modification Phosphoserine.

The protein belongs to the CALCOCO family. In terms of assembly, dimer. Part of a complex consisting of CALCOCO2, TAX1BP1 and MYO6. Interacts with MYO6. Interacts with GEMIN4. Interacts with ATG8 family members MAP1LC3A, MAP1LC3B, GABARAP, GABARAPL1 and GABARAPL2. Interacts with ATG8 family member MAP1LC3C. Interacts with LGALS8. Interacts with TOM1; the interaction is indirect and is mediated by MYO6, which acts as a bridge between TOM1 and CALCOCO2. Interacts with AZI2. As to quaternary structure, (Microbial infection) Interacts with Lassa virus protein Z. (Microbial infection) Interacts with Mopeia virus protein Z. In terms of processing, (Microbial infection) Cleaved by S.pyogenes SpeB protease; leading to its degradation. Degradation by SpeB prevents autophagy, promoting to S.pyogenes intracellular replication. As to expression, expressed in all tissues tested with highest expression in skeletal muscle and lowest in brain.

Its subcellular location is the cytoplasm. The protein resides in the perinuclear region. It is found in the cytoskeleton. The protein localises to the cytoplasmic vesicle. It localises to the autophagosome membrane. Functionally, xenophagy-specific receptor required for autophagy-mediated intracellular bacteria degradation. Acts as an effector protein of galectin-sensed membrane damage that restricts the proliferation of infecting pathogens such as Salmonella typhimurium upon entry into the cytosol by targeting LGALS8-associated bacteria for autophagy. Initially orchestrates bacteria targeting to autophagosomes and subsequently ensures pathogen degradation by regulating pathogen-containing autophagosome maturation. Bacteria targeting to autophagosomes relies on its interaction with MAP1LC3A, MAP1LC3B and/or GABARAPL2, whereas regulation of pathogen-containing autophagosome maturation requires the interaction with MAP3LC3C. May play a role in ruffle formation and actin cytoskeleton organization and seems to negatively regulate constitutive secretion. This Homo sapiens (Human) protein is Calcium-binding and coiled-coil domain-containing protein 2 (CALCOCO2).